The primary structure comprises 382 residues: SPRY domain-containing protein C285.10c (382 aa).

The helical transmembrane segment at Leu21 to Leu41 threads the bilayer. Residues Gly79–Tyr284 form the B30.2/SPRY domain. The tract at residues Ala304–Val382 is disordered. Composition is skewed to polar residues over residues Tyr309–Thr334 and Phe361–Gln372.

It localises to the cytoplasm. Its subcellular location is the membrane. The sequence is that of SPRY domain-containing protein C285.10c from Schizosaccharomyces pombe (strain 972 / ATCC 24843) (Fission yeast).